We begin with the raw amino-acid sequence, 165 residues long: S-(2-succino)cysteine N-acetyltransferase (165 aa).

In terms of domain architecture, N-acetyltransferase spans proline 3–arginine 162.

It belongs to the acetyltransferase family.

The enzyme catalyses S-(2-succino)-L-cysteine + acetyl-CoA = N-acetyl-S-(2-succino)-L-cysteine + CoA + H(+). The protein operates within amino-acid biosynthesis; L-cysteine biosynthesis. Catalyzes the N-acetylation of S-(2-succino)cysteine. Is involved in a S-(2-succino)cysteine (2SC) degradation pathway that allows B.subtilis to grow on 2SC as a sole sulfur source, via its metabolization to cysteine. Moreover, 2SC is a toxic compound in B.subtilis at high exogenous concentrations, and this enzyme relieves 2SC toxicity via N-acetylation. In Bacillus subtilis (strain 168), this protein is S-(2-succino)cysteine N-acetyltransferase.